A 461-amino-acid polypeptide reads, in one-letter code: Proline--tRNA ligase (461 aa).

Belongs to the class-II aminoacyl-tRNA synthetase family. ProS type 3 subfamily. In terms of assembly, homodimer.

It localises to the cytoplasm. It carries out the reaction tRNA(Pro) + L-proline + ATP = L-prolyl-tRNA(Pro) + AMP + diphosphate. Catalyzes the attachment of proline to tRNA(Pro) in a two-step reaction: proline is first activated by ATP to form Pro-AMP and then transferred to the acceptor end of tRNA(Pro). The protein is Proline--tRNA ligase of Methanococcus vannielii (strain ATCC 35089 / DSM 1224 / JCM 13029 / OCM 148 / SB).